We begin with the raw amino-acid sequence, 87 residues long: Small ribosomal subunit protein eS21 (87 aa).

This sequence belongs to the eukaryotic ribosomal protein eS21 family. As to quaternary structure, component of the small ribosomal subunit (SSU). Mature N.crassa ribosomes consist of a small (40S) and a large (60S) subunit. The 40S small subunit contains 1 molecule of ribosomal RNA (18S rRNA) and at least 32 different proteins. The large 60S subunit contains 3 rRNA molecules (26S, 5.8S and 5S rRNA) and at least 42 different proteins.

It is found in the cytoplasm. Functionally, component of the ribosome, a large ribonucleoprotein complex responsible for the synthesis of proteins in the cell. The small ribosomal subunit (SSU) binds messenger RNAs (mRNAs) and translates the encoded message by selecting cognate aminoacyl-transfer RNA (tRNA) molecules. The large subunit (LSU) contains the ribosomal catalytic site termed the peptidyl transferase center (PTC), which catalyzes the formation of peptide bonds, thereby polymerizing the amino acids delivered by tRNAs into a polypeptide chain. The nascent polypeptides leave the ribosome through a tunnel in the LSU and interact with protein factors that function in enzymatic processing, targeting, and the membrane insertion of nascent chains at the exit of the ribosomal tunnel. In Neurospora crassa (strain ATCC 24698 / 74-OR23-1A / CBS 708.71 / DSM 1257 / FGSC 987), this protein is Small ribosomal subunit protein eS21 (crp-7).